A 946-amino-acid chain; its full sequence is Villin-4 (946 aa).

Gelsolin-like repeat units follow at residues 28 to 109 (NFKP…ETEK), 152 to 219 (VHVK…EDGK), 274 to 339 (LEHE…TIMF), and 641 to 715 (EIHH…PQFF). Disordered regions lie at residues 744–783 (ATPS…ERHR) and 846–902 (TKST…PAPD). Polar residues predominate over residues 765 to 777 (QDKSQQRTRSMSH). Over residues 874-883 (SENEPEDDEN) the composition is skewed to acidic residues. The 66-residue stretch at 881-946 (DENSTIYPYE…NRLKSDLQLF (66 aa)) folds into the HP domain.

Belongs to the villin/gelsolin family.

It is found in the cytoplasm. The protein resides in the cytoskeleton. Ca(2+)-regulated actin-binding protein. Binds actin microfilaments (MFs). Involved in actin filament bundling, severing and capping. Caps the barbed end of actin filaments and is able to sever them in a calcium-dependent manner. This Oryza sativa subsp. indica (Rice) protein is Villin-4.